The following is a 194-amino-acid chain: Phosphoheptose isomerase (194 aa).

Residues 37-194 enclose the SIS domain; the sequence is IANSFKQGGK…LIEFEMAKTA (158 aa). 52–54 is a binding site for substrate; sequence NGG. Residues His61 and Glu65 each coordinate Zn(2+). Residues Glu65, 93–94, 119–121, Ser124, and Gln172 each bind substrate; these read ND and STS. 2 residues coordinate Zn(2+): Gln172 and His180.

Belongs to the SIS family. GmhA subfamily. In terms of assembly, homotetramer. Zn(2+) serves as cofactor.

It localises to the cytoplasm. The catalysed reaction is 2 D-sedoheptulose 7-phosphate = D-glycero-alpha-D-manno-heptose 7-phosphate + D-glycero-beta-D-manno-heptose 7-phosphate. It functions in the pathway carbohydrate biosynthesis; D-glycero-D-manno-heptose 7-phosphate biosynthesis; D-glycero-alpha-D-manno-heptose 7-phosphate and D-glycero-beta-D-manno-heptose 7-phosphate from sedoheptulose 7-phosphate: step 1/1. Its pathway is bacterial outer membrane biogenesis; LOS core biosynthesis. Functionally, catalyzes the isomerization of sedoheptulose 7-phosphate in D-glycero-D-manno-heptose 7-phosphate. The protein is Phosphoheptose isomerase of Haemophilus ducreyi (strain 35000HP / ATCC 700724).